We begin with the raw amino-acid sequence, 1004 residues long: Sodium/potassium-transporting ATPase subunit alpha-B (1004 aa).

2 helical membrane passes run 76-96 (LFGG…LAYG) and 110-126 (NLYL…VTGI). A disordered region spans residues 197 to 216 (SSLTGESEPQARSPEFTNDN). Helical transmembrane passes span 272 to 294 (FIHI…AFVL) and 301 to 329 (AVVF…TLTA). The active-site 4-aspartylphosphate intermediate is the Asp357. Lys489 is a binding site for ATP. Residues Asp698 and Asp702 each coordinate Mg(2+). Transmembrane regions (helical) follow at residues 768–791 (ISPF…ILCI), 828–855 (ERLI…VIMA), 897–918 (SSCH…LIIS), and 934–959 (ILNF…DKGL).

The protein belongs to the cation transport ATPase (P-type) (TC 3.A.3) family. Type IIC subfamily. As to quaternary structure, the sodium/potassium-transporting ATPase is composed of a catalytic alpha subunit, an auxiliary non-catalytic beta subunit and an additional regulatory subunit.

It is found in the cell membrane. The enzyme catalyses K(+)(out) + Na(+)(in) + ATP + H2O = K(+)(in) + Na(+)(out) + ADP + phosphate + H(+). This is the catalytic component of the active enzyme, which catalyzes the hydrolysis of ATP coupled with the exchange of sodium and potassium ions across the plasma membrane. This action creates the electrochemical gradient of sodium and potassium ions, providing the energy for active transport of various nutrients. This is Sodium/potassium-transporting ATPase subunit alpha-B from Artemia franciscana (Brine shrimp).